Here is a 313-residue protein sequence, read N- to C-terminus: Mitochondrial uncoupling protein 4 (313 aa).

3 Solcar repeats span residues 4-115 (KSFV…LKNK), 124-215 (LNLS…FKEG), and 224-309 (DGLG…VRKL). 6 helical membrane passes run 6 to 26 (FVEG…LDLI), 84 to 104 (AAAL…YSTT), 130 to 150 (IGAG…ADVA), 189 to 209 (RGSA…LASY), 230 to 250 (VVAS…VDVI), and 282 to 302 (YKGF…LFVT).

This sequence belongs to the mitochondrial carrier (TC 2.A.29) family. Expressed in roots, leaves, stems and flowers.

Its subcellular location is the mitochondrion inner membrane. Functionally, PUMPS are mitochondrial transporter proteins that create proton leaks across the inner mitochondrial membrane, thus uncoupling oxidative phosphorylation. This leads to a decrease in the efficiency of oxidative phosphorylation and an increase in heat production. May be involved in protecting plant cells against oxidative stress damage. Recombinant PUMP4, reconstituted into liposomes, transports a wide range of dicarboxylic acids including malate, oxaloacetate and succinate as well as phosphate, sulfate and thiosulfate. However, it is unknown if these transports are of any biological significance in vivo. This is Mitochondrial uncoupling protein 4 (PUMP4) from Arabidopsis thaliana (Mouse-ear cress).